Here is a 263-residue protein sequence, read N- to C-terminus: Large ribosomal subunit protein uL23m (263 aa).

Residues 1 to 45 constitute a mitochondrion transit peptide; the sequence is MPRLTVGTKNMLYPLQKTLAVGSCKPEQVPIRSLASVVESSSKIL.

The protein belongs to the universal ribosomal protein uL23 family. Component of the mitochondrial large ribosomal subunit (mt-LSU). Mature yeast 74S mitochondrial ribosomes consist of a small (37S) and a large (54S) subunit. The 37S small subunit contains a 15S ribosomal RNA (15S mt-rRNA) and 34 different proteins. The 54S large subunit contains a 21S rRNA (21S mt-rRNA) and 46 different proteins. uL23m forms the wall of the exit tunnel. Interacts with the C-terminus of OXA1.

The protein localises to the mitochondrion. In terms of biological role, component of the mitochondrial ribosome (mitoribosome), a dedicated translation machinery responsible for the synthesis of mitochondrial genome-encoded proteins, including at least some of the essential transmembrane subunits of the mitochondrial respiratory chain. The mitoribosomes are attached to the mitochondrial inner membrane and translation products are cotranslationally integrated into the membrane. This Saccharomyces cerevisiae (strain ATCC 204508 / S288c) (Baker's yeast) protein is Large ribosomal subunit protein uL23m (MRP20).